The primary structure comprises 284 residues: NAD kinase (284 aa).

Asp-70 acts as the Proton acceptor in catalysis. NAD(+) contacts are provided by residues 70 to 71 (DG), 139 to 140 (NE), Lys-167, Asp-169, Leu-177, 180 to 185 (TAYNLS), and Gln-236.

It belongs to the NAD kinase family. The cofactor is a divalent metal cation.

The protein resides in the cytoplasm. It carries out the reaction NAD(+) + ATP = ADP + NADP(+) + H(+). Its function is as follows. Involved in the regulation of the intracellular balance of NAD and NADP, and is a key enzyme in the biosynthesis of NADP. Catalyzes specifically the phosphorylation on 2'-hydroxyl of the adenosine moiety of NAD to yield NADP. This is NAD kinase from Helicobacter pylori (strain ATCC 700392 / 26695) (Campylobacter pylori).